We begin with the raw amino-acid sequence, 801 residues long: Glycerol-3-phosphate acyltransferase 2, mitochondrial (801 aa).

Residues 1 to 24 (MDTMLKSNPQTQQRSNHNGQETSL) form a disordered region. Residues 1–305 (MDTMLKSNPQ…PGPRLSALGQ (305 aa)) are Cytoplasmic-facing. Residues 180–290 (QLHKGQMKMV…SGQPLLIFLE (111 aa)) form an acyltransferase region. Positions 205 to 210 (HKSLLD) match the HXXXXD motif motif. The helical transmembrane segment at 306–332 (AWLGVVIQAVQAGIISDATLVPVAIAY) threads the bilayer. Topologically, residues 333–449 (DLVPDAPCNM…QLLVRRLSRH (117 aa)) are mitochondrial intermembrane. A helical membrane pass occupies residues 450–472 (VLSASVASSAVMSTAIMATLLLL). The Cytoplasmic segment spans residues 473 to 801 (KHQKGVVLSQ…EQFIRQFICS (329 aa)). Residue Ser-662 is modified to Phosphoserine. Thr-666 bears the Phosphothreonine mark. Ser-668 and Ser-670 each carry phosphoserine.

The protein belongs to the GPAT/DAPAT family. In terms of assembly, interacts with PIWIL2. As to expression, highly expressed in the testis. Expressed at lower levels in the heart, liver, kidney, spleen and adipose cells. Only detected in primary spermatocytes.

Its subcellular location is the mitochondrion outer membrane. The catalysed reaction is sn-glycerol 3-phosphate + an acyl-CoA = a 1-acyl-sn-glycero-3-phosphate + CoA. It catalyses the reaction a 1-acyl-sn-glycero-3-phosphate + an acyl-CoA = a 1,2-diacyl-sn-glycero-3-phosphate + CoA. It carries out the reaction 1-(9Z-octadecenoyl)-sn-glycero-3-phosphate + (9Z)-octadecenoyl-CoA = 1,2-di-(9Z-octadecenoyl)-sn-glycero-3-phosphate + CoA. The enzyme catalyses 1-(9Z-octadecenoyl)-sn-glycero-3-phosphate + (5Z,8Z,11Z,14Z)-eicosatetraenoyl-CoA = 1-(9Z)-octadecenoyl-2-(5Z,8Z,11Z,14Z)-eicosatetraenoyl-sn-glycero-3-phosphate + CoA. The catalysed reaction is (5Z,8Z,11Z,14Z)-eicosatetraenoyl-CoA + sn-glycerol 3-phosphate = 1-(5Z,8Z,11Z,14Z-eicosatetraenoyl)-sn-glycero-3-phosphate + CoA. It functions in the pathway phospholipid metabolism; CDP-diacylglycerol biosynthesis; CDP-diacylglycerol from sn-glycerol 3-phosphate: step 1/3. Its activity is regulated as follows. Inhibited by N-ethylmaleimide (NEM). Its function is as follows. Transfers an acyl-group from acyl-ACP to the sn-1 position of glycerol-3-phosphate producing a lysophosphatidic acid (LPA), an essential step for the triacylglycerol (TAG) and glycerophospholipids. In vitro also transfers an acyl-group from acyl-ACP to the LPA producing a phosphatidic acid (PA). Prefers arachidonoyl-CoA as the acyl donor. Required for primary processing step during piRNA biosynthesis. Molecular mechanisms by which it promotes piRNA biosynthesis are unclear and do not involve its acyltransferase activity. The polypeptide is Glycerol-3-phosphate acyltransferase 2, mitochondrial (Mus musculus (Mouse)).